Here is a 422-residue protein sequence, read N- to C-terminus: Cell division protein DivIB (422 aa).

Composition is skewed to basic and acidic residues over residues 1 to 23 and 62 to 75; these read MVDW…KQEE and EEAK…DQEQ. The segment at 1–77 is disordered; sequence MVDWDKEAQR…DFAKDQEQKH (77 aa). Topologically, residues 1 to 109 are cytoplasmic; that stretch reads MVDWDKEAQR…LQLKSVSWSR (109 aa). A helical transmembrane segment spans residues 110–130; sequence LILAAAFLFMIIFSAFWLSPL. Residues 131–202 enclose the POTRA domain; it reads NRIATIEVSG…RTVEVNVQEF (72 aa). The Extracellular portion of the chain corresponds to 131-422; that stretch reads NRIATIEVSG…TVTQTRSSNS (292 aa). The interval 329-422 is disordered; sequence NPLNDPFASP…TVTQTRSSNS (94 aa). Basic and acidic residues predominate over residues 338 to 379; that stretch reads PEEKASYQEKVDQAKEKSKEKQAKADKHSSESKLGDKPKPRG. Low complexity predominate over residues 389–422; the sequence is TSSQRQTSSQSSPRPGTNSSQQSSTVTQTRSSNS.

The protein belongs to the FtsQ/DivIB family. DivIB subfamily.

It is found in the cell membrane. Cell division protein that may be involved in stabilizing or promoting the assembly of the division complex. In Aerococcus urinae (strain CCUG 59500 / ACS-120-V-Col10a), this protein is Cell division protein DivIB.